The chain runs to 276 residues: MTDTYLHETLVFDNKLSYIDNQRDTDGPAILLLPGWCHDHRVYKYLIQELDADFRVIVPNWRGHGLSPCEVPDFGYQEQVKDALEILDQLGVETFLPVSHSHGGWVLVELLEQAGPERAPRGIIMDWLMWAPKPDFAKSLTLLKDPERWREGTHGLFDVWLDGHDEKRVRHHLLEEMADYGYDCWGRSGRVIEDAYGRNGSPMQMMANLTKTRPIRHIFSQPTEPEYEKINSDFAEQHPWFSYAKLGGPTHFPAIDVPDRAAVHIREFATAIRQGQ.

The region spanning 28–150 is the AB hydrolase-1 domain; the sequence is PAILLLPGWC…TLLKDPERWR (123 aa). Residues 36–38, 100–101, and Trp160 contribute to the substrate site; these read WCH and HS. Catalysis depends on His251, which acts as the Proton donor/acceptor.

Belongs to the AB hydrolase superfamily. Requires None. Contrary to most other dioxygenases, this enzyme does not require a cofactor for catalysis. as cofactor.

It catalyses the reaction 3-hydroxy-2-methyl-1H-quinolin-4-one + O2 = N-acetylanthranilate + CO + H(+). Its function is as follows. Ring-cleaving dioxygenase involved in quinaldine degradation and utilization. The chain is 1H-3-hydroxy-4-oxoquinaldine 2,4-dioxygenase (hod) from Paenarthrobacter nitroguajacolicus (Arthrobacter nitroguajacolicus).